The sequence spans 549 residues: Oxygen-dependent choline dehydrogenase (549 aa).

4–33 (DFVIIGSGSAGSAMAYRLSENGRYSVIVIE) serves as a coordination point for FAD. The Proton acceptor role is filled by histidine 465.

The protein belongs to the GMC oxidoreductase family. FAD serves as cofactor.

The catalysed reaction is choline + A = betaine aldehyde + AH2. It carries out the reaction betaine aldehyde + NAD(+) + H2O = glycine betaine + NADH + 2 H(+). Its pathway is amine and polyamine biosynthesis; betaine biosynthesis via choline pathway; betaine aldehyde from choline (cytochrome c reductase route): step 1/1. Its function is as follows. Involved in the biosynthesis of the osmoprotectant glycine betaine. Catalyzes the oxidation of choline to betaine aldehyde and betaine aldehyde to glycine betaine at the same rate. The sequence is that of Oxygen-dependent choline dehydrogenase from Brucella suis biovar 1 (strain 1330).